The following is a 274-amino-acid chain: MQGASRESLAAAWREAEELLVRPRPGAQPPEEVGTQLFSVTAILDEHPALRRALSDPAVEPGRKVSLADRLFGERIGETARRLVATVVRARWSRVRDLSDALETLGVLALLVAAERSRAVDDVEDELFRFGRIVASRPELRDALANRTLPVENKVRLVERLLADRAHPVTVALVTQLVRHPRGRTPEEGFADFSGIAARFRQRLVARVTTAVALTDDERSRLRRALSELYGRDVHLHVEVDPRIGGGVVVQLGDEVIDGSIASILAETRQRLAS.

It belongs to the ATPase delta chain family. As to quaternary structure, F-type ATPases have 2 components, F(1) - the catalytic core - and F(0) - the membrane proton channel. F(1) has five subunits: alpha(3), beta(3), gamma(1), delta(1), epsilon(1). F(0) has three main subunits: a(1), b(2) and c(10-14). The alpha and beta chains form an alternating ring which encloses part of the gamma chain. F(1) is attached to F(0) by a central stalk formed by the gamma and epsilon chains, while a peripheral stalk is formed by the delta and b chains.

It localises to the cell membrane. In terms of biological role, f(1)F(0) ATP synthase produces ATP from ADP in the presence of a proton or sodium gradient. F-type ATPases consist of two structural domains, F(1) containing the extramembraneous catalytic core and F(0) containing the membrane proton channel, linked together by a central stalk and a peripheral stalk. During catalysis, ATP synthesis in the catalytic domain of F(1) is coupled via a rotary mechanism of the central stalk subunits to proton translocation. This protein is part of the stalk that links CF(0) to CF(1). It either transmits conformational changes from CF(0) to CF(1) or is implicated in proton conduction. The chain is ATP synthase subunit delta from Acidothermus cellulolyticus (strain ATCC 43068 / DSM 8971 / 11B).